The sequence spans 967 residues: Phosphoenolpyruvate carboxylase 1 (967 aa).

S11 bears the Phosphoserine mark. Active-site residues include H173 and K602. S704 is subject to Phosphoserine.

This sequence belongs to the PEPCase type 1 family. As to quaternary structure, homotetramer. Requires Mg(2+) as cofactor. The cofactor is Mn(2+). Post-translationally, the phosphorylation of Ser-11 is reversibly promoted by inorganic phosphate (Pi) deprivation. Enhanced activity by phosphorylation at pH 7.3 by lowering Km and sensitivity to inhibition by L-malate and L-aspartate, while enhancing activation by glucose 6-phosphate. As to expression, expressed in all plant organs, with higher levels in roots.

Its subcellular location is the cytoplasm. It carries out the reaction oxaloacetate + phosphate = phosphoenolpyruvate + hydrogencarbonate. By light-reversible phosphorylation. Activated by inorganic phosphate (Pi) deprivation and glucose 6-phosphate. Inhibited by L-malate and L-aspartate. In terms of biological role, through the carboxylation of phosphoenolpyruvate (PEP) it forms oxaloacetate, a four-carbon dicarboxylic acid source for the tricarboxylic acid cycle. Contributes probably to the adaptation to inorganic phosphate (Pi) deprivation. The polypeptide is Phosphoenolpyruvate carboxylase 1 (PPC1) (Arabidopsis thaliana (Mouse-ear cress)).